Here is a 388-residue protein sequence, read N- to C-terminus: Succinate--CoA ligase [ADP-forming] subunit beta (388 aa).

An ATP-grasp domain is found at 9 to 246; sequence KDILRQFGVP…FEEEDPAEVL (238 aa). Residues Lys-46, 53–55, Glu-99, Ala-102, and Glu-107 each bind ATP; that span reads GRG. The Mg(2+) site is built by Asn-201 and Asp-215. Substrate contacts are provided by residues Asn-266 and 323-325; that span reads GIM.

This sequence belongs to the succinate/malate CoA ligase beta subunit family. As to quaternary structure, heterotetramer of two alpha and two beta subunits. Requires Mg(2+) as cofactor.

It carries out the reaction succinate + ATP + CoA = succinyl-CoA + ADP + phosphate. It catalyses the reaction GTP + succinate + CoA = succinyl-CoA + GDP + phosphate. It participates in carbohydrate metabolism; tricarboxylic acid cycle; succinate from succinyl-CoA (ligase route): step 1/1. Succinyl-CoA synthetase functions in the citric acid cycle (TCA), coupling the hydrolysis of succinyl-CoA to the synthesis of either ATP or GTP and thus represents the only step of substrate-level phosphorylation in the TCA. The beta subunit provides nucleotide specificity of the enzyme and binds the substrate succinate, while the binding sites for coenzyme A and phosphate are found in the alpha subunit. The protein is Succinate--CoA ligase [ADP-forming] subunit beta of Verminephrobacter eiseniae (strain EF01-2).